Consider the following 103-residue polypeptide: uncharacterized protein (103 aa).

This is an uncharacterized protein from Archaeoglobus fulgidus (strain ATCC 49558 / DSM 4304 / JCM 9628 / NBRC 100126 / VC-16).